The following is a 218-amino-acid chain: Small ribosomal subunit protein uS3c (218 aa).

Positions 47–118 (VQKNMKTSSG…KLNIAITRIE (72 aa)) constitute a KH type-2 domain.

It belongs to the universal ribosomal protein uS3 family. Part of the 30S ribosomal subunit.

The protein resides in the plastid. It is found in the chloroplast. In Lactuca sativa (Garden lettuce), this protein is Small ribosomal subunit protein uS3c (rps3).